We begin with the raw amino-acid sequence, 598 residues long: Probable translation initiation factor IF-2 (598 aa).

The tr-type G domain maps to 3–225; the sequence is LRCPIVSVLG…GLAQKFLEQK (223 aa). The interval 12–19 is G1; the sequence is GHVDHGKT. Residue 12–19 coordinates GTP; that stretch reads GHVDHGKT. The G2 stretch occupies residues 37-41; that stretch reads GITQH. Residues 76–79 are G3; the sequence is DTPG. GTP-binding positions include 76–80 and 130–133; these read DTPGH and NKLD. The interval 130 to 133 is G4; the sequence is NKLD. Residues 200–202 are G5; sequence SAI.

The protein belongs to the TRAFAC class translation factor GTPase superfamily. Classic translation factor GTPase family. IF-2 subfamily.

Its function is as follows. Function in general translation initiation by promoting the binding of the formylmethionine-tRNA to ribosomes. Seems to function along with eIF-2. This chain is Probable translation initiation factor IF-2, found in Methanococcus vannielii (strain ATCC 35089 / DSM 1224 / JCM 13029 / OCM 148 / SB).